A 195-amino-acid chain; its full sequence is Protein A43 (195 aa).

A signal peptide spans 1 to 21 (MMIKWIISILTMSIMPVLVYS). Topologically, residues 23-166 (SIFRFRSEDV…YKDINDKYND (144 aa)) are extracellular. Residues N66 and N115 are each glycosylated (N-linked (GlcNAc...) asparagine; by host). The helical transmembrane segment at 167 to 187 (IYDFTAICMLIASTLIVTIYV) threads the bilayer. Residues 188 to 195 (FKKIKMNS) lie on the Cytoplasmic side of the membrane.

The protein belongs to the orthopoxvirus OPG172 protein family.

Its subcellular location is the host membrane. It localises to the host cell surface. This is Protein A43 (OPG172) from Homo sapiens (Human).